We begin with the raw amino-acid sequence, 395 residues long: S-adenosylmethionine synthase (395 aa).

Residue His18 participates in ATP binding. Mg(2+) is bound at residue Asp20. Glu46 serves as a coordination point for K(+). Glu59 and Gln103 together coordinate L-methionine. Positions 103-113 (QSVDIAVGVDA) are flexible loop. ATP is bound by residues 170 to 172 (DAK), 235 to 236 (KF), Asp244, 250 to 251 (RK), Ala267, and Lys271. Asp244 is a binding site for L-methionine. Lys275 contacts L-methionine.

Belongs to the AdoMet synthase family. In terms of assembly, homotetramer; dimer of dimers. It depends on Mg(2+) as a cofactor. Requires K(+) as cofactor.

The protein localises to the cytoplasm. The catalysed reaction is L-methionine + ATP + H2O = S-adenosyl-L-methionine + phosphate + diphosphate. It functions in the pathway amino-acid biosynthesis; S-adenosyl-L-methionine biosynthesis; S-adenosyl-L-methionine from L-methionine: step 1/1. In terms of biological role, catalyzes the formation of S-adenosylmethionine (AdoMet) from methionine and ATP. The overall synthetic reaction is composed of two sequential steps, AdoMet formation and the subsequent tripolyphosphate hydrolysis which occurs prior to release of AdoMet from the enzyme. This is S-adenosylmethionine synthase from Acidiphilium cryptum (strain JF-5).